The sequence spans 814 residues: Origin of replication complex subunit 1 (814 aa).

Over residues 1-15 the composition is skewed to polar residues; sequence MDLSATPSRSKSGLR. Residues 1-127 are disordered; sequence MDLSATPSRS…PKKPKKRAYY (127 aa). Composition is skewed to low complexity over residues 51-62 and 69-80; these read APMSPVTPSSVR and ETPTKVTSETPV. The Nuclear localization signal signature appears at 105–112; it reads PKRQRQRQ. Positions 108–127 are enriched in basic residues; the sequence is QRQRQRQRQQPKKPKKRAYY. The interval 157–181 is histone H3 binding; sequence DPEAEECRVCFRAGAAVMVECDVCL. The PHD-type zinc finger occupies 160-209; it reads AEECRVCFRAGAAVMVECDVCLGGFHLRCVRPPLRRVPEGDWACPYCEAE. The Zn(2+) site is built by Cys163, Cys166, Cys177, Cys180, His185, and Cys188. The segment at 197–201 is histone H3 binding; that stretch reads PEGDW. The Zn(2+) site is built by Cys203 and Cys206. One can recognise a BAH domain in the interval 218-335; that stretch reads PKPPEGKRIV…IHWHNFKRLA (118 aa). The segment at 310-315 is histone H3 binding; sequence ASDQGD. Acidic residues-rich tracts occupy residues 339 to 349 and 360 to 373; these read DEPETKEDPGD and SDSDEDSEYDEEEE. The interval 339–384 is disordered; sequence DEPETKEDPGDEPYNAGNDYVSDSDEDSEYDEEEEPTKCSSARTHQ. Positions 433–804 are necessary and sufficient for ORC complex assembly; sequence PKSLPCRDKE…DDVTFALKES (372 aa). ATP contacts are provided by residues 468–475 and 468–476; these read GVPGTGKT and GVPGTGKTM. Positions 558 and 559 each coordinate Mg(2+). ATP-binding residues include Glu559, Asn592, and Arg657.

This sequence belongs to the ORC1 family. As to quaternary structure, component of the origin recognition complex (ORC) composed of at least ORC1, ORC2, ORC3, ORC4, ORC5 and ORC6. ORC is regulated in a cell-cycle and development dependent manner. It is sequentially assembled at the exit from anaphase of mitosis and disassembled as cells enter S phase. Binds unmodified and methylated histone H3. Expressed strongly in root tips and shoot apical meristem (SAM), and weakly in young leaves. Not detected in mature leaves.

The protein localises to the nucleus. Its function is as follows. Essential protein. Component of the origin recognition complex (ORC) that binds origins of replication. It has a role in both chromosomal replication and mating type transcriptional silencing. Binds to the ARS consensus sequence (ACS) of origins of replication. H3K4me3 effector that positively regulates the transcription of a subset of genes. Required for cell proliferation. This is Origin of replication complex subunit 1 from Oryza sativa subsp. japonica (Rice).